A 229-amino-acid chain; its full sequence is Potassium/proton antiporter CemA (229 aa).

Helical transmembrane passes span 7 to 27 (FSPI…YLSF), 106 to 126 (MILR…FYIW), and 189 to 209 (IISG…KYWI).

This sequence belongs to the CemA family.

It is found in the plastid membrane. It carries out the reaction K(+)(in) + H(+)(out) = K(+)(out) + H(+)(in). Functionally, may be involved in proton extrusion. The sequence is that of Potassium/proton antiporter CemA from Cuscuta reflexa (Southern Asian dodder).